A 382-amino-acid chain; its full sequence is V-type proton ATPase subunit C 1 (382 aa).

N-acetylthreonine is present on Thr2.

The protein belongs to the V-ATPase C subunit family. V-ATPase is a heteromultimeric enzyme made up of two complexes: the ATP-hydrolytic V1 complex and the proton translocation V0 complex. The V1 complex consists of three catalytic AB heterodimers that form a heterohexamer, three peripheral stalks each consisting of EG heterodimers, one central rotor including subunits D and F, and the regulatory subunits C and H. The proton translocation complex V0 consists of the proton transport subunit a, a ring of proteolipid subunits c9c'', rotary subunit d, subunits e and f, and the accessory subunits ATP6AP1/Ac45 and ATP6AP2/PRR. In terms of tissue distribution, ubiquitous. Abundant in brain, liver, kidney and testis.

Its subcellular location is the cytoplasmic vesicle. It is found in the secretory vesicle. It localises to the synaptic vesicle membrane. The protein localises to the clathrin-coated vesicle membrane. In terms of biological role, subunit of the V1 complex of vacuolar(H+)-ATPase (V-ATPase), a multisubunit enzyme composed of a peripheral complex (V1) that hydrolyzes ATP and a membrane integral complex (V0) that translocates protons. V-ATPase is responsible for acidifying and maintaining the pH of intracellular compartments and in some cell types, is targeted to the plasma membrane, where it is responsible for acidifying the extracellular environment. Subunit C is necessary for the assembly of the catalytic sector of the enzyme and is likely to have a specific function in its catalytic activity. This chain is V-type proton ATPase subunit C 1 (Atp6v1c1), found in Mus musculus (Mouse).